The chain runs to 242 residues: uncharacterized protein (242 aa).

The first 20 residues, 1-20, serve as a signal peptide directing secretion; the sequence is MTFIKGLPLMLLTISLGCNA.

It belongs to the periplasmic pilus chaperone family.

It localises to the periplasm. Could be required for the biogenesis of the putative YbgD fimbria. This is an uncharacterized protein from Escherichia coli (strain K12).